A 317-amino-acid polypeptide reads, in one-letter code: Transcription factor EC (317 aa).

Residues 1 to 90 form a necessary for transcriptional transactivation region; sequence MTLDHRLFSQ…GLMNASCPSI (90 aa). A bHLH domain is found at 110 to 163; the sequence is QKKDNHNLIERRRRYNINYRIKELGTLIPKSNDPDIRWNKGTILKASVDYIKWL. Positions 242-317 are necessary for transcriptional transactivation; that stretch reads TSPEFYEQAV…SLSSEDGDEL (76 aa).

The protein belongs to the MiT/TFE family. Homodimer. Forms heterodimers with TFE3. Forms heterodimers with MITF. Interacts with MITF. In terms of tissue distribution, expressed in kidney, spleen, lung, liver, testis and muscle.

It localises to the nucleus. Functionally, transcriptional regulator that acts as a repressor or an activator. Acts as a transcriptional repressor on minimal promoter containing mu E3 enhancer sequence. Binds to mu E3 DNA sequence of the immunoglobulin heavy-chain gene enhancer. Acts as a transcriptional transactivator on the proximal promoter region of the tartrate-resistant acid phosphatase (TRAP) E-box containing promoter. Collaborates with MITF in target gene activation. Acts as a transcriptional repressor on minimal promoter containing mu E3 enhancer sequence. Binds to mu E3 DNA sequence of the immunoglobulin heavy-chain gene enhancer. Binds DNA in a homo- or heterodimeric form. The chain is Transcription factor EC (Tfec) from Rattus norvegicus (Rat).